A 1342-amino-acid chain; its full sequence is Restriction of telomere capping protein 1 (1342 aa).

The segment at 1–39 is disordered; it reads MSLSPHVENASIPKGSTPIPKNRNVSSIGKGEFLGSSSS. WD repeat units lie at residues 207 to 248, 256 to 296, 305 to 342, 367 to 406, 439 to 486, and 489 to 527; these read NKFS…SIDN, EHTR…SKSS, TASDSIRDVKWMPGYNFASKNDQGSSTYGNLKSGYKFA, AHTGPGLCLNWHPNQEYIATGGRDGKCCLWFVGDNANAAE, NTGY…IPKH, and LSETPSLGLVWWDENLIFNIDKGTRINGWDINKEPTVLE. 5 disordered regions span residues 559-593, 600-619, 630-651, 736-766, and 788-831; these read PELQPTSSTTCKKHPGTIKNPKNGNPENQGIIGGI, TGLTSFTPERPPTLKAGPTF, ASSFNSSSASLTSLTPQTENRE, KNATETHGDNTTTTNNNDDGDDDDDDDDDDD, and LMNE…DRSR. Residues 630–644 are compositionally biased toward low complexity; it reads ASSFNSSSASLTSLT. A compositionally biased stretch (acidic residues) spans 753 to 766; the sequence is DDGDDDDDDDDDDD. Low complexity predominate over residues 815–824; that stretch reads SSISSISASR. Residues 844-884 form a WD 7 repeat; it reads KIQTLVDLISIATHNASVYLSIDDLTNFKIWILIRDSLLWD. 2 disordered regions span residues 942 to 963 and 1014 to 1047; these read AFRANSDEPSDAEKKPVSKLKE and DEHEHQEEEQPHDSPTKSAQFHASPIAKSIPILQ. 2 stretches are compositionally biased toward basic and acidic residues: residues 952–963 and 1016–1028; these read DAEKKPVSKLKE and HEHQEEEQPHDSP. Ser1037, Ser1081, Ser1088, Ser1090, Ser1124, and Ser1134 each carry phosphoserine. 2 WD repeats span residues 1130 to 1170 and 1217 to 1256; these read SRPD…KQLY and LFGIAADVLKYCPFEDIMGSEGDQSSIRLFCERCGELITN. The segment at 1294–1336 adopts an RING-type; degenerate zinc-finger fold; sequence CVLCERPLKKLTMVILPCGHEGHFQCIQEWFLDENEQECPGGC.

This sequence belongs to the WD repeat RTC1 family.

It localises to the vacuole. In terms of biological role, may be involved in a process influencing telomere capping. This chain is Restriction of telomere capping protein 1 (RTC1), found in Saccharomyces cerevisiae (strain JAY291) (Baker's yeast).